The primary structure comprises 602 residues: Arginine--tRNA ligase (602 aa).

A 'HIGH' region motif is present at residues 132-142 (ANPTGPLHVGH).

Belongs to the class-I aminoacyl-tRNA synthetase family. Monomer.

The protein localises to the cytoplasm. It catalyses the reaction tRNA(Arg) + L-arginine + ATP = L-arginyl-tRNA(Arg) + AMP + diphosphate. The chain is Arginine--tRNA ligase from Cupriavidus metallidurans (strain ATCC 43123 / DSM 2839 / NBRC 102507 / CH34) (Ralstonia metallidurans).